We begin with the raw amino-acid sequence, 357 residues long: N-methyltransferase dtpB (357 aa).

The protein belongs to the methyltransferase superfamily.

It participates in alkaloid biosynthesis. In terms of biological role, N-methyltransferase; part of the gene cluster that mediates the biosynthesis of the dimeric diketopiperazine alkaloid ditryptophenaline. The nonribosomal peptide synthase dtpA accepts L-tryptophan and L-phenylalanine as its substrates and forms the phenylalanyl-tryptophanyl cyclic dipeptide product cyclophenylalanyltryptophenyl. The N-methyltransferase dtpB is responsible for the N-methylation of cyclophenylalanyltryptophenyl to yield cyclo-N-methylphenylalanyltryptophenyl. The cytochrome P450 monooxygenase is responsible not only for pyrroloindole ring formation but also for concurrent dimerization of N-methylphenylalanyltryptophanyl diketopiperazine monomers into a homodimeric product. This Aspergillus flavus (strain ATCC 200026 / FGSC A1120 / IAM 13836 / NRRL 3357 / JCM 12722 / SRRC 167) protein is N-methyltransferase dtpB.